Here is a 127-residue protein sequence, read N- to C-terminus: Fumarate reductase subunit C (127 aa).

3 helical membrane-spanning segments follow: residues 30 to 50 (ATILPLIFFTICLTFGLGCLV), 67 to 87 (IVVVLNILALLGSLFHAQTFF), and 107 to 127 (IIVLAQWAAVAAISLFVLVLV).

This sequence belongs to the FrdC family. Part of an enzyme complex containing four subunits: a flavoprotein (FrdA), an iron-sulfur protein (FrdB), and two hydrophobic anchor proteins (FrdC and FrdD).

Its subcellular location is the cell inner membrane. Functionally, anchors the catalytic components of the fumarate reductase complex to the cell membrane, binds quinones. The protein is Fumarate reductase subunit C of Photobacterium profundum (strain SS9).